Here is a 130-residue protein sequence, read N- to C-terminus: Large ribosomal subunit protein bL21 (130 aa).

Residues 103 to 130 form a disordered region; that stretch reads AGGKTSKAEPRKTRKAEPAAESAPAAAE. Over residues 108–120 the composition is skewed to basic and acidic residues; it reads SKAEPRKTRKAEP. Positions 121–130 are enriched in low complexity; the sequence is AAESAPAAAE.

Belongs to the bacterial ribosomal protein bL21 family. In terms of assembly, part of the 50S ribosomal subunit. Contacts protein L20.

This protein binds to 23S rRNA in the presence of protein L20. The protein is Large ribosomal subunit protein bL21 of Methylorubrum extorquens (strain CM4 / NCIMB 13688) (Methylobacterium extorquens).